Consider the following 138-residue polypeptide: Nucleoside diphosphate kinase (138 aa).

The ATP site is built by Lys-10, Phe-58, Arg-86, Thr-92, Arg-103, and Asn-113. His-116 serves as the catalytic Pros-phosphohistidine intermediate.

Belongs to the NDK family. Homotetramer. Mg(2+) is required as a cofactor.

The protein localises to the cytoplasm. The enzyme catalyses a 2'-deoxyribonucleoside 5'-diphosphate + ATP = a 2'-deoxyribonucleoside 5'-triphosphate + ADP. It catalyses the reaction a ribonucleoside 5'-diphosphate + ATP = a ribonucleoside 5'-triphosphate + ADP. Its function is as follows. Major role in the synthesis of nucleoside triphosphates other than ATP. The ATP gamma phosphate is transferred to the NDP beta phosphate via a ping-pong mechanism, using a phosphorylated active-site intermediate. The chain is Nucleoside diphosphate kinase from Haemophilus ducreyi (strain 35000HP / ATCC 700724).